Reading from the N-terminus, the 307-residue chain is Dihydroorotate dehydrogenase A (fumarate) (307 aa).

FMN contacts are provided by residues serine 21 and 46 to 47 (KT). Substrate contacts are provided by residues lysine 46, 70-74 (NSVGL), and asparagine 130. Asparagine 130 provides a ligand contact to FMN. The Nucleophile role is filled by cysteine 133. Positions 168 and 194 each coordinate FMN. 195-196 (NT) lines the substrate pocket. FMN-binding positions include glycine 220, 246 to 247 (GG), and 268 to 269 (GS).

This sequence belongs to the dihydroorotate dehydrogenase family. Type 1 subfamily. In terms of assembly, homodimer. Requires FMN as cofactor.

Its subcellular location is the cytoplasm. It catalyses the reaction (S)-dihydroorotate + fumarate = orotate + succinate. It participates in pyrimidine metabolism; UMP biosynthesis via de novo pathway. Its function is as follows. Catalyzes the conversion of dihydroorotate to orotate with fumarate as the electron acceptor. The chain is Dihydroorotate dehydrogenase A (fumarate) (pyrD) from Lactobacillus delbrueckii subsp. bulgaricus (strain ATCC 11842 / DSM 20081 / BCRC 10696 / JCM 1002 / NBRC 13953 / NCIMB 11778 / NCTC 12712 / WDCM 00102 / Lb 14).